A 453-amino-acid chain; its full sequence is Putative F-box/FBD/LRR-repeat protein At1g66290 (453 aa).

A disordered region spans residues Met-1–Val-28. Residues Ser-14–Gly-23 are compositionally biased toward polar residues. The region spanning Val-28–Phe-81 is the F-box domain. LRR repeat units follow at residues Ser-155–Leu-179, Leu-210–Ser-235, Ala-246–Ser-269, Leu-305–Pro-329, and Cys-358–Glu-381. The FBD domain maps to Arg-373 to Leu-423.

This chain is Putative F-box/FBD/LRR-repeat protein At1g66290, found in Arabidopsis thaliana (Mouse-ear cress).